The following is a 186-amino-acid chain: Ribosome-recycling factor (186 aa).

Belongs to the RRF family.

The protein resides in the cytoplasm. In terms of biological role, responsible for the release of ribosomes from messenger RNA at the termination of protein biosynthesis. May increase the efficiency of translation by recycling ribosomes from one round of translation to another. The chain is Ribosome-recycling factor from Ralstonia pickettii (strain 12J).